The chain runs to 1030 residues: MSNLLRDFEVEAKNPSLEARQRWRSSVSIVKNRTRRFRNIRDLDKLADYENKKHQIQEKIRVAFFVQKAALHFIDAAARPEYKLTDEVKKAGFSIEADELASMVRKNDTKSLAQKGGVEELAKKVSVSLSEGIRSSEVPIREKIFGENRYTEKPARSFLMFVWEALHDITLIILMVCAVVSIGVGVATEGFPRGMYDGTGILLSILLVVMVTAISDYKQSLQFRDLDREKKKIIVQVTRDGSRQEISIHDLVVGDVVHLSIGDQVPADGIFISGYNLEIDESSLSGESEPSHVNKEKPFLLSGTKVQNGSAKMLVTTVGMRTEWGKLMETLVDGGEDETPLQVKLNGVATIIGKIGLSFAVLTFVVLCIRFVLDKATSGSFTNWSSEDALTLLDYFAISVTIIVVAVPEGLPLAVTLSLAFAMKKLMSDRALVRHLAACETMGSSTCICTDKTGTLTTNHMVVNKVWICDKVQERQEGSKESFELELSEEVQSTLLQGIFQNTGSEVVKDKDGNTQILGSPTERAILEFGLLLGGDFNTQRKEHKILKIEPFNSDKKKMSVLIALPGGGARAFCKGASEIVLKMCENVVDSNGESVPLTEERITSISDIIEGFASEALRTLCLVYKDLDEAPSGELPDGGYTMVAVVGIKDPVRPGVREAVQTCQAAGITVRMVTGDNISTAKAIAKECGIYTEGGLAIEGSEFRDLSPHEMRAIIPKIQVMARSLPLDKHTLVSNLRKIGEVVAVTGDGTNDAPALHEADIGLAMGIAGTEVAKENADVIIMDDNFKTIVNVARWGRAVYINIQKFVQFQLTVNVVALIINFVSACITGSAPLTAVQLLWVNMIMDTLGALALATEPPNEGLMKRAPIARTASFITKTMWRNIAGQSVYQLIVLGILNFAGKSLLKLDGPDSTAVLNTVIFNSFVFCQVFNEINSREIEKINVFKGMFNSWVFTWVMTVTVVFQVIIVEFLGAFASTVPLSWQHWLLSILIGSLNMIVAVILKCVPVESRHHHDGYDLLPSGPSSSNSA.

Residues 1-157 are Cytoplasmic-facing; sequence MSNLLRDFEV…NRYTEKPARS (157 aa). The tract at residues 19 to 30 is interaction with calmodulin; that stretch reads ARQRWRSSVSIV. Phosphoserine is present on serine 28. The helical transmembrane segment at 158-178 threads the bilayer; that stretch reads FLMFVWEALHDITLIILMVCA. The Lumenal segment spans residues 179-196; sequence VVSIGVGVATEGFPRGMY. A helical transmembrane segment spans residues 197 to 217; sequence DGTGILLSILLVVMVTAISDY. Over 218–345 the chain is Cytoplasmic; it reads KQSLQFRDLD…EDETPLQVKL (128 aa). The helical transmembrane segment at 346-365 threads the bilayer; sequence NGVATIIGKIGLSFAVLTFV. The Lumenal portion of the chain corresponds to 366-395; the sequence is VLCIRFVLDKATSGSFTNWSSEDALTLLDY. A helical membrane pass occupies residues 396-413; the sequence is FAISVTIIVVAVPEGLPL. Over 414 to 804 the chain is Cytoplasmic; that stretch reads AVTLSLAFAM…RWGRAVYINI (391 aa). Aspartate 451 acts as the 4-aspartylphosphate intermediate in catalysis. Residues aspartate 749 and aspartate 753 each contribute to the Mg(2+) site. A helical membrane pass occupies residues 805–823; that stretch reads QKFVQFQLTVNVVALIINF. Residues 824–834 lie on the Lumenal side of the membrane; it reads VSACITGSAPL. Residues 835–855 traverse the membrane as a helical segment; sequence TAVQLLWVNMIMDTLGALALA. The Cytoplasmic segment spans residues 856-875; it reads TEPPNEGLMKRAPIARTASF. The helical transmembrane segment at 876-898 threads the bilayer; sequence ITKTMWRNIAGQSVYQLIVLGIL. At 899–910 the chain is on the lumenal side; it reads NFAGKSLLKLDG. A helical membrane pass occupies residues 911–932; the sequence is PDSTAVLNTVIFNSFVFCQVFN. Residues 933–950 are Cytoplasmic-facing; that stretch reads EINSREIEKINVFKGMFN. The chain crosses the membrane as a helical span at residues 951-972; that stretch reads SWVFTWVMTVTVVFQVIIVEFL. Topologically, residues 973–982 are lumenal; the sequence is GAFASTVPLS. A helical membrane pass occupies residues 983–1004; it reads WQHWLLSILIGSLNMIVAVILK. Over 1005–1030 the chain is Cytoplasmic; sequence CVPVESRHHHDGYDLLPSGPSSSNSA.

Belongs to the cation transport ATPase (P-type) (TC 3.A.3) family. Type IIB subfamily.

It localises to the vacuole membrane. The catalysed reaction is Ca(2+)(in) + ATP + H2O = Ca(2+)(out) + ADP + phosphate + H(+). Activated by calmodulin. Its function is as follows. This magnesium-dependent enzyme catalyzes the hydrolysis of ATP coupled with the translocation of calcium from the cytosol into small vacuoles. The sequence is that of Calcium-transporting ATPase 4, plasma membrane-type (ACA4) from Arabidopsis thaliana (Mouse-ear cress).